A 513-amino-acid chain; its full sequence is Aspartic proteinase A2 (513 aa).

Positions 1 to 24 (MGVYSRAVAFSVFVSFLLFFTAYS) are cleaved as a signal peptide. Residues 25–71 (KRNDGTFRVGLKKLKLDPNNRLATRFGSKQEEALRSSLRSYNNNLGG) constitute a propeptide, activation peptide. Positions 89-510 (YYGEIAIGTP…DFGNEQVGFA (422 aa)) constitute a Peptidase A1 domain. D107 is an active-site residue. Disulfide bonds link C120-C126 and C285-C289. Residue D294 is part of the active site. One can recognise a Saposin B-type domain in the interval 319–424 (VVSQQCKTVV…NEICERMPSP (106 aa)). Disulfide bonds link C324–C418, C349–C390, C355–C387, and C432–C469. N-linked (GlcNAc...) asparagine glycosylation occurs at N404.

This sequence belongs to the peptidase A1 family. In terms of tissue distribution, expressed in seed pods and dry seeds.

The protein localises to the vacuole. Its function is as follows. Involved in the breakdown of propeptides of storage proteins in protein-storage vacuoles. This chain is Aspartic proteinase A2 (APA2), found in Arabidopsis thaliana (Mouse-ear cress).